A 346-amino-acid polypeptide reads, in one-letter code: Phosphate acyltransferase (346 aa).

It belongs to the PlsX family. In terms of assembly, homodimer. Probably interacts with PlsY.

It localises to the cytoplasm. It carries out the reaction a fatty acyl-[ACP] + phosphate = an acyl phosphate + holo-[ACP]. The protein operates within lipid metabolism; phospholipid metabolism. Its function is as follows. Catalyzes the reversible formation of acyl-phosphate (acyl-PO(4)) from acyl-[acyl-carrier-protein] (acyl-ACP). This enzyme utilizes acyl-ACP as fatty acyl donor, but not acyl-CoA. The protein is Phosphate acyltransferase of Psychromonas ingrahamii (strain DSM 17664 / CCUG 51855 / 37).